We begin with the raw amino-acid sequence, 293 residues long: Ribosomal protein L11 methyltransferase (293 aa).

Thr-145, Gly-166, Asp-188, and Asn-230 together coordinate S-adenosyl-L-methionine.

It belongs to the methyltransferase superfamily. PrmA family.

The protein resides in the cytoplasm. The catalysed reaction is L-lysyl-[protein] + 3 S-adenosyl-L-methionine = N(6),N(6),N(6)-trimethyl-L-lysyl-[protein] + 3 S-adenosyl-L-homocysteine + 3 H(+). Functionally, methylates ribosomal protein L11. The protein is Ribosomal protein L11 methyltransferase of Shewanella baltica (strain OS155 / ATCC BAA-1091).